We begin with the raw amino-acid sequence, 657 residues long: Hemocyanin B chain (657 aa).

The cysteines at positions 93 and 98 are disulfide-linked. N167 carries N-linked (GlcNAc...) asparagine glycosylation. Cu cation contacts are provided by H194, H198, H224, H344, H348, and H384. 2 cysteine pairs are disulfide-bonded: C483-C502 and C562-C609.

The protein belongs to the tyrosinase family. Hemocyanin subfamily. Hexamer of a number of different chains, of which A, B, and C have been identified. Hemolymph.

The protein resides in the secreted. Its subcellular location is the extracellular space. Functionally, hemocyanins are copper-containing oxygen carriers occurring freely dissolved in the hemolymph of many mollusks and arthropods. This is Hemocyanin B chain from Panulirus interruptus (California spiny lobster).